The following is a 503-amino-acid chain: Major facilitator superfamily domain-containing protein 4A (503 aa).

The next 12 helical transmembrane spans lie at 19–39, 53–73, 82–102, 105–125, 139–159, 214–234, 289–309, 338–358, 366–386, 392–412, 427–447, and 455–475; these read LTYW…GPTL, ITWV…LGGV, LFLL…IPFC, VGVL…IDTI, AIFL…SPLI, YAFW…FYLI, IWNA…TLFM, GYLP…SIPV, SMLF…LLSQ, MFVG…SMLA, VLVT…GSVM, and FLVC…VLLV. The tract at residues 484 to 503 is disordered; sequence SEDSACKPPGLDGEATSYQS.

It belongs to the major facilitator superfamily.

Its subcellular location is the membrane. The chain is Major facilitator superfamily domain-containing protein 4A (mfsd4a) from Xenopus tropicalis (Western clawed frog).